A 190-amino-acid chain; its full sequence is dTTP/UTP pyrophosphatase (190 aa).

The active-site Proton acceptor is D67.

The protein belongs to the Maf family. YhdE subfamily. Requires a divalent metal cation as cofactor.

It is found in the cytoplasm. It carries out the reaction dTTP + H2O = dTMP + diphosphate + H(+). The enzyme catalyses UTP + H2O = UMP + diphosphate + H(+). Its function is as follows. Nucleoside triphosphate pyrophosphatase that hydrolyzes dTTP and UTP. May have a dual role in cell division arrest and in preventing the incorporation of modified nucleotides into cellular nucleic acids. The chain is dTTP/UTP pyrophosphatase from Aquifex aeolicus (strain VF5).